A 343-amino-acid polypeptide reads, in one-letter code: Uroporphyrinogen decarboxylase (343 aa).

Substrate contacts are provided by residues 24 to 28, phenylalanine 43, aspartate 74, tyrosine 151, serine 206, and histidine 321; that span reads RQAGR.

This sequence belongs to the uroporphyrinogen decarboxylase family. Homodimer.

The protein resides in the cytoplasm. The enzyme catalyses uroporphyrinogen III + 4 H(+) = coproporphyrinogen III + 4 CO2. It functions in the pathway porphyrin-containing compound metabolism; protoporphyrin-IX biosynthesis; coproporphyrinogen-III from 5-aminolevulinate: step 4/4. Catalyzes the decarboxylation of four acetate groups of uroporphyrinogen-III to yield coproporphyrinogen-III. In Thermosynechococcus vestitus (strain NIES-2133 / IAM M-273 / BP-1), this protein is Uroporphyrinogen decarboxylase.